Consider the following 1034-residue polypeptide: Probable isoleucine--tRNA ligase, mitochondrial (1034 aa).

Residues 1–32 (MISLNNSFFNKRVIVNSFNNYKRSFGTKSQNE) constitute a mitochondrion transit peptide. The 'HIGH' region signature appears at 94–104 (PYANGDLHMGH). A 'KMSKS' region motif is present at residues 655-659 (KMSKS). Lysine 658 provides a ligand contact to ATP.

It belongs to the class-I aminoacyl-tRNA synthetase family.

It is found in the mitochondrion matrix. The catalysed reaction is tRNA(Ile) + L-isoleucine + ATP = L-isoleucyl-tRNA(Ile) + AMP + diphosphate. The polypeptide is Probable isoleucine--tRNA ligase, mitochondrial (mileS) (Dictyostelium discoideum (Social amoeba)).